Here is a 243-residue protein sequence, read N- to C-terminus: Benzil reductase ((S)-benzoin forming) (243 aa).

The NADP(+) site is built by Ile6, Asn80, Tyr147, Lys151, and Thr184. Tyr147 acts as the Proton acceptor in catalysis.

Belongs to the short-chain dehydrogenases/reductases (SDR) family.

The protein resides in the cytoplasm. It catalyses the reaction (S)-benzoin + NADP(+) = benzil + NADPH + H(+). Its function is as follows. Reduces benzil stereospecifically to (S)-benzoin. The chain is Benzil reductase ((S)-benzoin forming) (yueD) from Bacillus subtilis (strain 168).